The following is a 323-amino-acid chain: tRNA U34 carboxymethyltransferase (323 aa).

Residues Lys91, Trp105, Lys110, Gly130, 181 to 182 (IE), Met196, Tyr200, and Arg315 each bind carboxy-S-adenosyl-L-methionine.

It belongs to the class I-like SAM-binding methyltransferase superfamily. CmoB family. Homotetramer.

The enzyme catalyses carboxy-S-adenosyl-L-methionine + 5-hydroxyuridine(34) in tRNA = 5-carboxymethoxyuridine(34) in tRNA + S-adenosyl-L-homocysteine + H(+). Catalyzes carboxymethyl transfer from carboxy-S-adenosyl-L-methionine (Cx-SAM) to 5-hydroxyuridine (ho5U) to form 5-carboxymethoxyuridine (cmo5U) at position 34 in tRNAs. In Yersinia pestis bv. Antiqua (strain Antiqua), this protein is tRNA U34 carboxymethyltransferase.